We begin with the raw amino-acid sequence, 481 residues long: Chromosomal replication initiator protein DnaA (481 aa).

The segment at 1 to 71 (MTDLSAFWPQ…ETFAEDILGR (71 aa)) is domain I, interacts with DnaA modulators. The segment at 71–143 (RPVTIELRIG…PAIGGGHEST (73 aa)) is domain II. Over residues 86–96 (ASAPAAASPRS) the composition is skewed to low complexity. The disordered stretch occupies residues 86–110 (ASAPAAASPRSPGRPAPAPVAATPT). The tract at residues 144 to 361 (RLNPAFTFES…GALKRVVAYS (218 aa)) is domain III, AAA+ region. The ATP site is built by Gly189, Gly191, Lys192, and Thr193. A domain IV, binds dsDNA region spans residues 362–481 (RFSNQPISLD…YAALQQMLRN (120 aa)).

It belongs to the DnaA family. Oligomerizes as a right-handed, spiral filament on DNA at oriC.

The protein resides in the cytoplasm. In terms of biological role, plays an essential role in the initiation and regulation of chromosomal replication. ATP-DnaA binds to the origin of replication (oriC) to initiate formation of the DNA replication initiation complex once per cell cycle. Binds the DnaA box (a 9 base pair repeat at the origin) and separates the double-stranded (ds)DNA. Forms a right-handed helical filament on oriC DNA; dsDNA binds to the exterior of the filament while single-stranded (ss)DNA is stabiized in the filament's interior. The ATP-DnaA-oriC complex binds and stabilizes one strand of the AT-rich DNA unwinding element (DUE), permitting loading of DNA polymerase. After initiation quickly degrades to an ADP-DnaA complex that is not apt for DNA replication. Binds acidic phospholipids. This Laribacter hongkongensis (strain HLHK9) protein is Chromosomal replication initiator protein DnaA.